The primary structure comprises 177 residues: NAD(P)H-quinone oxidoreductase subunit 6, chloroplastic (177 aa).

The next 5 helical transmembrane spans lie at 10 to 30, 32 to 52, 61 to 81, 90 to 112, and 152 to 172; these read VLLV…VLLT, PIYS…FYIL, AQLL…VMFM, FYLW…FSLI, and FYLP…GAIT.

Belongs to the complex I subunit 6 family. NDH is composed of at least 16 different subunits, 5 of which are encoded in the nucleus.

It is found in the plastid. It localises to the chloroplast thylakoid membrane. It carries out the reaction a plastoquinone + NADH + (n+1) H(+)(in) = a plastoquinol + NAD(+) + n H(+)(out). It catalyses the reaction a plastoquinone + NADPH + (n+1) H(+)(in) = a plastoquinol + NADP(+) + n H(+)(out). In terms of biological role, NDH shuttles electrons from NAD(P)H:plastoquinone, via FMN and iron-sulfur (Fe-S) centers, to quinones in the photosynthetic chain and possibly in a chloroplast respiratory chain. The immediate electron acceptor for the enzyme in this species is believed to be plastoquinone. Couples the redox reaction to proton translocation, and thus conserves the redox energy in a proton gradient. The chain is NAD(P)H-quinone oxidoreductase subunit 6, chloroplastic (ndhG) from Acorus calamus var. americanus (American sweet flag).